Here is a 200-residue protein sequence, read N- to C-terminus: THO complex subunit tho5 (200 aa).

Belongs to the THOC5 family. In terms of assembly, component of the THO and TREX complexes.

It is found in the cytoplasm. The protein localises to the nucleus. Functionally, component the THO subcomplex of the TREX complex, which operates in coupling transcription elongation to mRNA export. The THO complex is recruited to transcribed genes and moves along the gene with the elongating polymerase during transcription. THO is important for stabilizing nascent RNA in the RNA polymerase II elongation complex by preventing formation of DNA:RNA hybrids behind the elongating polymerase. The THO complex is also required to maintain TRAMP complex occupancy at sites of snoRNA transcription thus promoting exosome-mediated degradation of snoRNA precursors. This Schizosaccharomyces pombe (strain 972 / ATCC 24843) (Fission yeast) protein is THO complex subunit tho5.